A 300-amino-acid chain; its full sequence is Ribosomal RNA small subunit methyltransferase H (300 aa).

Residues 35–37 (GGH), D55, F82, D100, and Q107 each bind S-adenosyl-L-methionine.

Belongs to the methyltransferase superfamily. RsmH family.

It localises to the cytoplasm. The enzyme catalyses cytidine(1402) in 16S rRNA + S-adenosyl-L-methionine = N(4)-methylcytidine(1402) in 16S rRNA + S-adenosyl-L-homocysteine + H(+). Functionally, specifically methylates the N4 position of cytidine in position 1402 (C1402) of 16S rRNA. The sequence is that of Ribosomal RNA small subunit methyltransferase H from Chlamydia trachomatis serovar L2 (strain ATCC VR-902B / DSM 19102 / 434/Bu).